We begin with the raw amino-acid sequence, 449 residues long: Exodeoxyribonuclease 7 large subunit (449 aa).

The protein belongs to the XseA family. Heterooligomer composed of large and small subunits.

The protein resides in the cytoplasm. It catalyses the reaction Exonucleolytic cleavage in either 5'- to 3'- or 3'- to 5'-direction to yield nucleoside 5'-phosphates.. Its function is as follows. Bidirectionally degrades single-stranded DNA into large acid-insoluble oligonucleotides, which are then degraded further into small acid-soluble oligonucleotides. The polypeptide is Exodeoxyribonuclease 7 large subunit (Salmonella paratyphi B (strain ATCC BAA-1250 / SPB7)).